The chain runs to 627 residues: BURP domain-containing protein 12 (627 aa).

The N-terminal stretch at 1-25 (MASPPHLPLLLLLLVVVCNAAGGDG) is a signal peptide. Asn119, Asn175, Asn251, Asn366, Asn384, and Asn530 each carry an N-linked (GlcNAc...) asparagine glycan. In terms of domain architecture, BURP spans 415-626 (FFRETELVSG…FEGDMTWTVA (212 aa)).

Expressed in stems, leaves, shoot and panicles.

This Oryza sativa subsp. japonica (Rice) protein is BURP domain-containing protein 12 (BURP12).